Consider the following 2335-residue polypeptide: Serine/threonine-protein kinase tor1 (2335 aa).

15 HEAT repeats span residues 1-31 (MEYF…SSTK), 164-201 (LYIS…VVCQ), 331-371 (PYLQ…AVKL), 410-449 (PIQE…AREP), 474-512 (YSLI…RDPI), 522-560 (ESVA…RHLA), 562-596 (PDNI…YNPA), 642-679 (PYIQ…VEGE), 684-722 (DVRG…RSGY), 728-766 (LDYP…LDPY), 843-880 (VFLP…IIGP), 904-923 (LLVI…DEFK), 924-961 (FYLP…FGSN), 964-1003 (EYMH…SVNF), and 1005-1042 (DHAS…QLGY). The region spanning 1226–1781 (VISAHASKCN…VYSLTVSSKS (556 aa)) is the FAT domain. The PI3K/PI4K catalytic domain occupies 1955 to 2269 (FHHTFEVISS…ARHADYAALS (315 aa)). A G-loop region spans residues 1961-1967 (VISSKQR). A Phosphothreonine; by PKB/AKT1 modification is found at Thr-1972. The tract at residues 2134–2142 (GLGDRHPSN) is catalytic loop. The interval 2154–2179 (HIDFGDCFEVAMHREKFPEKIPFRLT) is activation loop. The 33-residue stretch at 2303–2335 (EQLPVKAQVEKLIQQATAPENLCRCYVGWCSFW) folds into the FATC domain.

The protein belongs to the PI3/PI4-kinase family. In terms of assembly, the target of rapamycin complex 2 (TORC2) is composed of at least bit61, pop3/wat1, sin1, ste20 and tor1. Post-translationally, phosphorylation at Thr-1972 in the ATP-binding region by AKT1 strongly reduces kinase activity.

It is found in the cytoplasm. The catalysed reaction is L-seryl-[protein] + ATP = O-phospho-L-seryl-[protein] + ADP + H(+). It carries out the reaction L-threonyl-[protein] + ATP = O-phospho-L-threonyl-[protein] + ADP + H(+). In terms of biological role, catalytic component of TORC2, which regulates multiple cellular processes to control cell growth in response to environmental signals. In response to signals, TORC2 phosphorylates AGC protein kinase family members. TORC2 is required for cell survival under various stress conditions. TORC2 positively controls G1 cell-cycle arrest, sexual development and amino acid uptake. Positively regulates amino acid uptake through the control of expression of amino acid permeases. Responsible for the phosphorylation of AGC kinase gad8 at 'Ser-527' and 'Ser-546', activating gad8 kinase activity and promoting sexual development. In Schizosaccharomyces pombe (strain 972 / ATCC 24843) (Fission yeast), this protein is Serine/threonine-protein kinase tor1.